Here is a 565-residue protein sequence, read N- to C-terminus: Hemagglutinin-neuraminidase (565 aa).

The Intravirion portion of the chain corresponds to 1-20 (MVAEDAPVRGTCRVLFRTTT). Residues 21-41 (LIFLCTLLALSISILYESLII) traverse the membrane as a helical segment. At 42-565 (RKQIMSQAGS…VPFIRQVTLS (524 aa)) the chain is on the virion surface side. 2 N-linked (GlcNAc...) asparagine; by host glycosylation sites follow: asparagine 110 and asparagine 139. Cystine bridges form between cysteine 161/cysteine 185, cysteine 175/cysteine 236, and cysteine 227/cysteine 240. The involved in neuraminidase activity stretch occupies residues 223–228 (NRKSCS). A glycan (N-linked (GlcNAc...) asparagine; by host) is linked at asparagine 267. 3 cysteine pairs are disulfide-bonded: cysteine 333/cysteine 454, cysteine 365/cysteine 375, and cysteine 448/cysteine 458. A glycan (N-linked (GlcNAc...) asparagine; by host) is linked at asparagine 504. Residues cysteine 528 and cysteine 539 are joined by a disulfide bond.

The protein belongs to the paramyxoviruses hemagglutinin-neuraminidase family. As to quaternary structure, homotetramer; composed of disulfide-linked homodimers. Interacts with F protein trimer.

It is found in the virion membrane. It localises to the host cell membrane. The catalysed reaction is Hydrolysis of alpha-(2-&gt;3)-, alpha-(2-&gt;6)-, alpha-(2-&gt;8)- glycosidic linkages of terminal sialic acid residues in oligosaccharides, glycoproteins, glycolipids, colominic acid and synthetic substrates.. Its function is as follows. Attaches the virus to sialic acid-containing cell receptors and thereby initiating infection. Binding of HN protein to the receptor induces a conformational change that allows the F protein to trigger virion/cell membranes fusion. In terms of biological role, neuraminidase activity ensures the efficient spread of the virus by dissociating the mature virions from the neuraminic acid containing glycoproteins. This chain is Hemagglutinin-neuraminidase (HN), found in Canis lupus familiaris (Dog).